A 274-amino-acid chain; its full sequence is tRNA-cytidine(32) 2-sulfurtransferase (274 aa).

A PP-loop motif motif is present at residues 40–45 (SGGKDS). 3 residues coordinate [4Fe-4S] cluster: cysteine 115, cysteine 118, and cysteine 206.

Belongs to the TtcA family. As to quaternary structure, homodimer. The cofactor is Mg(2+). [4Fe-4S] cluster is required as a cofactor.

It is found in the cytoplasm. It catalyses the reaction cytidine(32) in tRNA + S-sulfanyl-L-cysteinyl-[cysteine desulfurase] + AH2 + ATP = 2-thiocytidine(32) in tRNA + L-cysteinyl-[cysteine desulfurase] + A + AMP + diphosphate + H(+). The protein operates within tRNA modification. Catalyzes the ATP-dependent 2-thiolation of cytidine in position 32 of tRNA, to form 2-thiocytidine (s(2)C32). The sulfur atoms are provided by the cysteine/cysteine desulfurase (IscS) system. The sequence is that of tRNA-cytidine(32) 2-sulfurtransferase from Pseudomonas fluorescens (strain Pf0-1).